The following is a 65-amino-acid chain: Large ribosomal subunit protein bL35 (65 aa).

Belongs to the bacterial ribosomal protein bL35 family.

This chain is Large ribosomal subunit protein bL35, found in Sodalis glossinidius (strain morsitans).